The primary structure comprises 351 residues: tRNA N6-adenosine threonylcarbamoyltransferase (351 aa).

Fe cation is bound by residues His-111 and His-115. Substrate-binding positions include 134–138 (LVSGG), Asp-167, Gly-180, and Asn-276. Asp-304 contacts Fe cation.

This sequence belongs to the KAE1 / TsaD family. Fe(2+) serves as cofactor.

The protein resides in the cytoplasm. The enzyme catalyses L-threonylcarbamoyladenylate + adenosine(37) in tRNA = N(6)-L-threonylcarbamoyladenosine(37) in tRNA + AMP + H(+). Its function is as follows. Required for the formation of a threonylcarbamoyl group on adenosine at position 37 (t(6)A37) in tRNAs that read codons beginning with adenine. Is involved in the transfer of the threonylcarbamoyl moiety of threonylcarbamoyl-AMP (TC-AMP) to the N6 group of A37, together with TsaE and TsaB. TsaD likely plays a direct catalytic role in this reaction. In Marinobacter nauticus (strain ATCC 700491 / DSM 11845 / VT8) (Marinobacter aquaeolei), this protein is tRNA N6-adenosine threonylcarbamoyltransferase.